A 197-amino-acid chain; its full sequence is Imidazoleglycerol-phosphate dehydratase (197 aa).

It belongs to the imidazoleglycerol-phosphate dehydratase family.

The protein resides in the cytoplasm. It catalyses the reaction D-erythro-1-(imidazol-4-yl)glycerol 3-phosphate = 3-(imidazol-4-yl)-2-oxopropyl phosphate + H2O. The protein operates within amino-acid biosynthesis; L-histidine biosynthesis; L-histidine from 5-phospho-alpha-D-ribose 1-diphosphate: step 6/9. This chain is Imidazoleglycerol-phosphate dehydratase, found in Thioalkalivibrio sulfidiphilus (strain HL-EbGR7).